The primary structure comprises 180 residues: Cell wall / vacuolar inhibitor of fructosidase 2 (180 aa).

Residues 1-23 form the signal peptide; that stretch reads MASSLIFLLLVTLTFSASTLISA. N-linked (GlcNAc...) asparagine glycosylation is present at N26. C35 and C44 form a disulfide bridge. N73 and N84 each carry an N-linked (GlcNAc...) asparagine glycan. Residues C101 and C141 are joined by a disulfide bond.

It belongs to the PMEI family. Mostly expressed at low levels in seedlings, stems, leaves and flowers (in all organs), and, to a lower extent, in roots and siliques.

It localises to the vacuole. Inhibits fructosidases from both cell wall (cell wall invertase CWI) and vacuoles (vacuolar invertase VI). This chain is Cell wall / vacuolar inhibitor of fructosidase 2 (C/VIF2), found in Arabidopsis thaliana (Mouse-ear cress).